The chain runs to 490 residues: Alpha-galactosidase (490 aa).

Residue 4–70 coordinates NAD(+); that stretch reads FKIAIIGAGS…LPTRVTATTD (67 aa). Residue Asn150 coordinates substrate. Cys171 is a Mn(2+) binding site. His172 functions as the Proton donor in the catalytic mechanism. Mn(2+) is bound at residue His201. Tyr258 (proton acceptor) is an active-site residue.

Belongs to the glycosyl hydrolase 4 family. As to quaternary structure, homodimer. The cofactor is Mn(2+). Requires NAD(+) as cofactor.

The catalysed reaction is Hydrolysis of terminal, non-reducing alpha-D-galactose residues in alpha-D-galactosides, including galactose oligosaccharides, galactomannans and galactolipids.. In Rhizobium meliloti (strain 1021) (Ensifer meliloti), this protein is Alpha-galactosidase (melA).